Consider the following 134-residue polypeptide: Small ribosomal subunit protein uS8 (134 aa).

It belongs to the universal ribosomal protein uS8 family. Part of the 30S ribosomal subunit. Contacts proteins S5 and S12.

One of the primary rRNA binding proteins, it binds directly to 16S rRNA central domain where it helps coordinate assembly of the platform of the 30S subunit. This Kosmotoga olearia (strain ATCC BAA-1733 / DSM 21960 / TBF 19.5.1) protein is Small ribosomal subunit protein uS8.